Here is a 653-residue protein sequence, read N- to C-terminus: Rab11 family-interacting protein 5 (653 aa).

One can recognise a C2 domain in the interval 5 to 146 (RGAEPAAGPS…AGRAQHTQWY (142 aa)). A phosphoserine mark is found at S176, S283, S286, S307, S357, and S367. Residues 269–300 (GPGAELLTRSPSRSSWLSTEGGRDSAQSPKLF) form a disordered region. Positions 277 to 286 (RSPSRSSWLS) are enriched in polar residues. 2 disordered regions span residues 342 to 402 (HIYN…AVLG) and 415 to 548 (PGAS…RSSL). Low complexity predominate over residues 357–368 (SISGSLPSSGSL). The span at 375–387 (FSEEGPRSTDDTW) shows a compositional bias: basic and acidic residues. Residues S391 and S395 each carry the phosphoserine modification. Basic and acidic residues-rich tracts occupy residues 420 to 430 (PGEEEGARLPE) and 447 to 460 (VAEK…ERKP). A phosphoserine mark is found at S494, S538, S547, and S553. An FIP-RBD domain is found at 586–648 (KDSAVLDQSA…ETSPTLLQIP (63 aa)).

Interacts with RAB11FIP4. Interacts with NAPG. Interacts with RO60. Interacts with RAB11A that has been activated by GTP binding. In terms of assembly, (Microbial infection) Interacts with Kaposi's sarcoma-associated herpesvirus/HHV-8 protein ORF45; this interaction results in the lysosomal degradation of ORF45 and the inhibition of viral particle release. Phosphorylated on serine and threonine residues. Phosphorylation at Ser-357 is PKA-dependent. As to expression, detected at low levels in heart, brain, placenta, lung, liver, adipocytes, kidney, spleen, skeletal muscle and pancreas.

The protein resides in the cytoplasm. It localises to the recycling endosome membrane. The protein localises to the early endosome membrane. Its subcellular location is the golgi apparatus membrane. It is found in the cytoplasmic vesicle. The protein resides in the secretory vesicle membrane. It localises to the mitochondrion membrane. Its function is as follows. Rab effector involved in protein trafficking from apical recycling endosomes to the apical plasma membrane. Involved in insulin granule exocytosis. May regulate V-ATPase intracellular transport in response to extracellular acidosis. The sequence is that of Rab11 family-interacting protein 5 from Homo sapiens (Human).